Here is a 637-residue protein sequence, read N- to C-terminus: Nuclear receptor-binding protein homolog (637 aa).

Residues 1-14 are compositionally biased toward polar residues; it reads MSNSQANAGISGST. 2 disordered regions span residues 1 to 60 and 74 to 99; these read MSNS…TADA and SEGVNLDSSPRESGDDSEDESEILEE. Low complexity predominate over residues 36–46; the sequence is PAATPPSQSTQ. Acidic residues predominate over residues 88–98; that stretch reads DDSEDESEILE. Residues 109 to 375 enclose the Protein kinase domain; sequence REEVDQRDVP…ANDLLFHPLL (267 aa). Disordered regions lie at residues 465–489 and 617–637; these read PNFRSRAASPERADSVKSATPEPVD and PQEQQNADGDVDVEHSGTTSN. Phosphoserine occurs at positions 473, 479, and 482. Position 484 is a phosphothreonine (threonine 484).

The protein belongs to the protein kinase superfamily. Ser/Thr protein kinase family.

The protein resides in the cytoplasm. Its subcellular location is the cell cortex. Functionally, may play a role in subcellular trafficking between the endoplasmic reticulum and Golgi apparatus. The sequence is that of Nuclear receptor-binding protein homolog from Drosophila melanogaster (Fruit fly).